We begin with the raw amino-acid sequence, 297 residues long: Homoserine kinase (297 aa).

82-92 (PVSRGLGSSAA) contacts ATP.

It belongs to the GHMP kinase family. Homoserine kinase subfamily.

The protein resides in the cytoplasm. It catalyses the reaction L-homoserine + ATP = O-phospho-L-homoserine + ADP + H(+). It functions in the pathway amino-acid biosynthesis; L-threonine biosynthesis; L-threonine from L-aspartate: step 4/5. Functionally, catalyzes the ATP-dependent phosphorylation of L-homoserine to L-homoserine phosphate. This chain is Homoserine kinase, found in Clostridium botulinum (strain Kyoto / Type A2).